Consider the following 837-residue polypeptide: Putative outer membrane protein assembly factor TP_0326 (837 aa).

Positions 1–21 (MLKKASAFLIASCCVMSLAWA) are cleaved as a signal peptide. Residues 22–433 (QANDNWYEGK…ILNVEEQSTA (412 aa)) are Periplasmic-facing. POTRA domains are found at residues 31-105 (KPIS…VKER), 106-182 (PSVK…IQEG), 185-273 (TVVS…VVEG), 276-354 (YRYG…VVER), and 357-430 (SHVE…VEEQ). Residues 434 to 442 (NVQFGVTFS) traverse the membrane as a beta stranded segment. Residues 443–450 (GVGEAGTF) are Extracellular; loop L1-facing. A beta stranded membrane pass occupies residues 451–461 (PLSLFCQWEEK). The Periplasmic segment spans residues 462 to 468 (NFLGKGN). A beta stranded transmembrane segment spans residues 469-476 (EISVNATL). The Extracellular; loop L2 segment spans residues 477 to 478 (GS). A beta stranded membrane pass occupies residues 479-489 (EAQSLKLGYVE). The Periplasmic portion of the chain corresponds to 490-499 (RWFLGSPLTV). A beta stranded transmembrane segment spans residues 500–520 (GFDFELTHKNLFVYRAGSYGN). The Extracellular; loop L3 portion of the chain corresponds to 521–530 (GLPHPYTSRE). A beta stranded transmembrane segment spans residues 531–543 (QWASSPGLAESFR). The Periplasmic portion of the chain corresponds to 544–554 (LKYSRFESAIG). A beta stranded membrane pass occupies residues 555–568 (AHTGYQWYPRYAVI). The Extracellular; loop L4 portion of the chain corresponds to 569–601 (RVNGGVDFRVVKNFYDKDNNQPFDLTVKEQLNW). The beta stranded transmembrane segment at 602-615 (TSINSFWTSVSFDG) threads the bilayer. Topologically, residues 616 to 623 (RDFAYDPS) are periplasmic. The beta stranded transmembrane segment at 624–636 (SGWFLGQRCTFNG) threads the bilayer. Residues 637–644 (LVPFLEKE) are Extracellular; loop L5-facing. Residues 645 to 658 (HSFRSDTKAEFYVT) form a beta stranded membrane-spanning segment. The Periplasmic portion of the chain corresponds to 659-667 (LLNYPVSAV). The chain crosses the membrane as a beta stranded span at residues 668–682 (WNLKFVLAFYTGVSV). The Extracellular; loop L6 portion of the chain corresponds to 683 to 724 (QTYYGRRKSENGKGNGVRSGALVIDGVLVGRGWSEDAKKNTG). A beta stranded membrane pass occupies residues 725–736 (DLLLHHWIEFRW). The Periplasmic portion of the chain corresponds to 737-741 (PLAHG). A beta stranded transmembrane segment spans residues 742-756 (IVSFDFFFDAAMVYN). At 757-786 (IESQSPNGSSSASSSSSSSSSSSRTTSSEG) the chain is on the extracellular; loop L7 side. The disordered stretch occupies residues 761-785 (SPNGSSSASSSSSSSSSSSRTTSSE). A compositionally biased stretch (low complexity) spans 765-784 (SSSASSSSSSSSSSSRTTSS). The chain crosses the membrane as a beta stranded span at residues 787-799 (LYKMSYGPGLRFT). Topologically, residues 800 to 802 (LPQ) are periplasmic. Residues 803 to 814 (FPLKLAFANTFT) traverse the membrane as a beta stranded segment. Topologically, residues 815–824 (SPGGIPKTKK) are extracellular; loop L8. The chain crosses the membrane as a beta stranded span at residues 825-829 (NWNFV). The Periplasmic portion of the chain corresponds to 830-837 (LSFTVNNL).

The protein belongs to the BamA family. In terms of assembly, part of 2 complexes of about 239 and 164 kDa.

Its subcellular location is the cell outer membrane. In terms of biological role, might be part of the outer membrane protein assembly complex, which is involved in assembly and insertion of beta-barrel proteins into the outer membrane. Its function is as follows. Both rabbit immune serum and rabbit antiserum specific for extracytoplasmic loop L4 promote bacteria internalization by rabbit peritoneal macrophages. Pools of human syphilitic sera from the USA and Columbia recognize both the N-terminal POTRA-containing and C-terminal beta-barrel domains as well as loop L4, showing this protein stimulates the immune system in both humans and rabbits. The polypeptide is Putative outer membrane protein assembly factor TP_0326 (tp92) (Treponema pallidum (strain Nichols)).